Consider the following 365-residue polypeptide: Methylthioribose-1-phosphate isomerase (365 aa).

Substrate is bound by residues arginine 53–alanine 55, arginine 90, and glutamine 201. The active-site Proton donor is aspartate 242. Residue asparagine 252–lysine 253 coordinates substrate.

It belongs to the eIF-2B alpha/beta/delta subunits family. MtnA subfamily.

It carries out the reaction 5-(methylsulfanyl)-alpha-D-ribose 1-phosphate = 5-(methylsulfanyl)-D-ribulose 1-phosphate. The protein operates within amino-acid biosynthesis; L-methionine biosynthesis via salvage pathway; L-methionine from S-methyl-5-thio-alpha-D-ribose 1-phosphate: step 1/6. Functionally, catalyzes the interconversion of methylthioribose-1-phosphate (MTR-1-P) into methylthioribulose-1-phosphate (MTRu-1-P). The polypeptide is Methylthioribose-1-phosphate isomerase (Methylorubrum extorquens (strain CM4 / NCIMB 13688) (Methylobacterium extorquens)).